The sequence spans 911 residues: Protein argonaute 4B (911 aa).

2 disordered regions span residues 1–51 (MDAH…RPGL) and 149–171 (KTAA…KRVR). One can recognise a PAZ domain in the interval 281-396 (PVIDFLLANQ…FPIELCSLIP (116 aa)). The 308-residue stretch at 565–872 (FLLCLLPERK…AAAQVGTFLK (308 aa)) folds into the Piwi domain.

Belongs to the argonaute family. Ago subfamily.

Its function is as follows. Probably involved in the RNA silencing pathway. May bind to short RNAs such as microRNAs (miRNAs) or short interfering RNAs (siRNAs), and represses the translation of mRNAs which are complementary to them. This is Protein argonaute 4B (AGO4B) from Oryza sativa subsp. japonica (Rice).